We begin with the raw amino-acid sequence, 378 residues long: Squalene methyltransferase 2 (378 aa).

Residues 17-37 (LLTVKGATGLIAALILGYIII) traverse the membrane as a helical segment.

This sequence belongs to the class I-like SAM-binding methyltransferase superfamily. Erg6/SMT family.

The protein localises to the microsome membrane. The catalysed reaction is squalene + 2 S-adenosyl-L-methionine = 3,22-dimethyl-1,2,23,24-tetradehydro-2,3,22,23-tetrahydrosqualene + 2 S-adenosyl-L-homocysteine + 2 H(+). In terms of biological role, converts squalene to mono- and dimethyl derivatives, but not to tri- and tetramethylated products. Unable to methylate cycloartenol, zymosterol or lanosterol. Methylates both C-3 and C22 positions, but only C-3 position in monomethylated products. Produces mainly monomethylated squalene and only 20% of dimethylated squalene. This is Squalene methyltransferase 2 (TMT-2) from Botryococcus braunii (Green alga).